Here is a 236-residue protein sequence, read N- to C-terminus: tRNA (guanine-N(1)-)-methyltransferase (236 aa).

Residues Gly110 and 129–134 each bind S-adenosyl-L-methionine; that span reads LGDFVL.

This sequence belongs to the RNA methyltransferase TrmD family. As to quaternary structure, homodimer.

The protein resides in the cytoplasm. It carries out the reaction guanosine(37) in tRNA + S-adenosyl-L-methionine = N(1)-methylguanosine(37) in tRNA + S-adenosyl-L-homocysteine + H(+). Functionally, specifically methylates guanosine-37 in various tRNAs. The chain is tRNA (guanine-N(1)-)-methyltransferase from Clostridium perfringens (strain ATCC 13124 / DSM 756 / JCM 1290 / NCIMB 6125 / NCTC 8237 / Type A).